A 286-amino-acid polypeptide reads, in one-letter code: Structural protein p32K (286 aa).

The propeptide at 1–12 is removed in mature form; the sequence is MYVTNNTALAGG. Residues 1-41 form a disordered region; that stretch reads MYVTNNTALAGGAYRKRKKKFQRPKPRKRARKSKKPPKSEN. Over residues 14-36 the composition is skewed to basic residues; that stretch reads YRKRKKKFQRPKPRKRARKSKKP.

The protein belongs to the atadenoviridae p32K protein family.

The protein resides in the virion. The chain is Structural protein p32K from Ovine adenovirus D serotype 7 (isolate OAV287) (OAdV-7).